A 659-amino-acid polypeptide reads, in one-letter code: Exoribonuclease 2 (659 aa).

One can recognise an RNB domain in the interval 189 to 531 (RKDLTALHFV…NHRLIKACIA (343 aa)). Residues 576 to 658 (KPEFQAEVQD…ETRSLIGNLV (83 aa)) enclose the S1 motif domain.

This sequence belongs to the RNR ribonuclease family. RNase II subfamily.

The protein resides in the cytoplasm. The catalysed reaction is Exonucleolytic cleavage in the 3'- to 5'-direction to yield nucleoside 5'-phosphates.. Involved in mRNA degradation. Hydrolyzes single-stranded polyribonucleotides processively in the 3' to 5' direction. This is Exoribonuclease 2 from Actinobacillus succinogenes (strain ATCC 55618 / DSM 22257 / CCUG 43843 / 130Z).